The primary structure comprises 34 residues: Photosystem II reaction center protein M (34 aa).

A helical membrane pass occupies residues 5–25; that stretch reads ILAFIAIVLFISVPTAFLLII.

This sequence belongs to the PsbM family. In terms of assembly, PSII is composed of 1 copy each of membrane proteins PsbA, PsbB, PsbC, PsbD, PsbE, PsbF, PsbH, PsbI, PsbJ, PsbK, PsbL, PsbM, PsbT, PsbX, PsbY, PsbZ, Psb30/Ycf12, at least 3 peripheral proteins of the oxygen-evolving complex and a large number of cofactors. It forms dimeric complexes.

It localises to the plastid. It is found in the chloroplast thylakoid membrane. Functionally, one of the components of the core complex of photosystem II (PSII). PSII is a light-driven water:plastoquinone oxidoreductase that uses light energy to abstract electrons from H(2)O, generating O(2) and a proton gradient subsequently used for ATP formation. It consists of a core antenna complex that captures photons, and an electron transfer chain that converts photonic excitation into a charge separation. This subunit is found at the monomer-monomer interface. The sequence is that of Photosystem II reaction center protein M from Cycas taitungensis (Prince sago).